We begin with the raw amino-acid sequence, 121 residues long: Small ribosomal subunit protein uS13 (121 aa).

Residues 94-121 form a disordered region; sequence GLPLRGQRTRTNARTRKGPRRAAQSLKK.

This sequence belongs to the universal ribosomal protein uS13 family. As to quaternary structure, part of the 30S ribosomal subunit. Forms a loose heterodimer with protein S19. Forms two bridges to the 50S subunit in the 70S ribosome.

Its function is as follows. Located at the top of the head of the 30S subunit, it contacts several helices of the 16S rRNA. In the 70S ribosome it contacts the 23S rRNA (bridge B1a) and protein L5 of the 50S subunit (bridge B1b), connecting the 2 subunits; these bridges are implicated in subunit movement. Contacts the tRNAs in the A and P-sites. This chain is Small ribosomal subunit protein uS13, found in Paraburkholderia phytofirmans (strain DSM 17436 / LMG 22146 / PsJN) (Burkholderia phytofirmans).